We begin with the raw amino-acid sequence, 396 residues long: Activity-regulated cytoskeleton-associated protein (396 aa).

Residues 54 to 78 (SKQVERELKGLHRSVGKLENNLDGY) adopt a coiled-coil conformation. The segment at 89-100 (KSIKACLCRCQE) is interaction with SH3GL1 or SH3GL3. An interaction with DNM2 region spans residues 195–214 (QSWVPGEDGQPSPGVDTQIF). Phosphoserine is present on Ser-260. Residues Lys-268 and Lys-269 each participate in a glycyl lysine isopeptide (Lys-Gly) (interchain with G-Cter in ubiquitin) cross-link. Thr-278 is modified (phosphothreonine). The interval 358-396 (GLEQAAEPSVTPLPTEDETEALTPALTSESVASDRTQPE) is disordered. The segment covering 382-396 (ALTSESVASDRTQPE) has biased composition (polar residues).

The protein belongs to the ARC/ARG3.1 family. In terms of assembly, homooligomer; homooligomerizes into virion-like capsids. Interacts with SH3GL1/endophilin-2, SH3GL3/endophilin-3 and DNM2/DYN2. Interacts with CAMK2B (in the kinase inactive state); leading to target ARC to inactive synapses. Interacts with PSEN1. Interacts with GRIN2A and GRIN2B; inhibiting homooligomerization. Post-translationally, palmitoylation anchors the protein into the membrane by allowing direct insertion into the hydrophobic core of the lipid bilayer. In terms of processing, ubiquitinated by UBE3A, leading to its degradation by the proteasome, thereby promoting AMPA receptors (AMPARs) expression at synapses. Ubiquitinated by RNF216 at Lys-268 and Lys-269 limiting ARC protein levels induced by synaptic activity and thus regulating ARC-dependent forms of synaptic plasticity. Phosphorylation at Ser-260 by CaMK2 prevents homooligomerization into virion-like capsids by disrupting an interaction surface essential for high-order oligomerization. Phosphorylation by CaMK2 inhibits synaptic activity. Expressed exclusively in certain parts of the brain including cortex and molecular layer of the hippocampus. Typically expressed at high level in a minority of neurons. Basal expression higher in cortex than in hippocampus, highest in visual cortex.

It is found in the extracellular vesicle membrane. The protein localises to the postsynaptic cell membrane. The protein resides in the synapse. It localises to the postsynaptic density. Its subcellular location is the early endosome membrane. It is found in the cell projection. The protein localises to the dendrite. The protein resides in the cytoplasm. It localises to the cytoskeleton. Its subcellular location is the cell cortex. It is found in the dendritic spine. The protein localises to the cytoplasmic vesicle. The protein resides in the secretory vesicle. It localises to the acrosome. Its subcellular location is the clathrin-coated vesicle membrane. Functionally, master regulator of synaptic plasticity that self-assembles into virion-like capsids that encapsulate RNAs and mediate intercellular RNA transfer in the nervous system. ARC protein is released from neurons in extracellular vesicles that mediate the transfer of ARC mRNA into new target cells, where ARC mRNA can undergo activity-dependent translation. ARC capsids are endocytosed and are able to transfer ARC mRNA into the cytoplasm of neurons. Acts as a key regulator of synaptic plasticity: required for protein synthesis-dependent forms of long-term potentiation (LTP) and depression (LTD) and for the formation of long-term memory. Regulates synaptic plasticity by promoting endocytosis of AMPA receptors (AMPARs) in response to synaptic activity: this endocytic pathway maintains levels of surface AMPARs in response to chronic changes in neuronal activity through synaptic scaling, thereby contributing to neuronal homeostasis. Acts as a postsynaptic mediator of activity-dependent synapse elimination in the developing cerebellum by mediating elimination of surplus climbing fiber synapses. Accumulates at weaker synapses, probably to prevent their undesired enhancement. This suggests that ARC-containing virion-like capsids may be required to eliminate synaptic material. Required to transduce experience into long-lasting changes in visual cortex plasticity and for long-term memory. Involved in postsynaptic trafficking and processing of amyloid-beta A4 (APP) via interaction with PSEN1. In addition to its role in synapses, also involved in the regulation of the immune system: specifically expressed in skin-migratory dendritic cells and regulates fast dendritic cell migration, thereby regulating T-cell activation. The sequence is that of Activity-regulated cytoskeleton-associated protein from Rattus norvegicus (Rat).